The following is a 596-amino-acid chain: Invasin CotH7 (596 aa).

Positions 1-17 are cleaved as a signal peptide; the sequence is MKSLSFISLACLTAVHA. N-linked (GlcNAc...) asparagine glycosylation is found at Asn82, Asn146, Asn163, Asn169, Asn288, Asn440, and Asn544. Residues 528-544 show a composition bias toward low complexity; that stretch reads SATIAAPATSESASQDN. The tract at residues 528 to 557 is disordered; it reads SATIAAPATSESASQDNTSDDTDSASTSSS. Residue Ser567 is the site of GPI-anchor amidated serine attachment. A propeptide spans 568 to 596 (removed in mature form); that stretch reads SASKSAPTFYCLQLVLYLSLSFKNLYKYI.

As to quaternary structure, interacts with host integrin beta-1 ITGB1 on the cell surface of host alveolar epithelial cells.

It localises to the cell membrane. Promotes invasion of host epithelial cells by adhering to receptors on the host cell surface to facilitate endocytosis of the pathogen into host cells. Probably binds integrin ITGA3:ITGB1 via ITGB1, on the cell surface of host alveolar epithelial cells. The chain is Invasin CotH7 from Rhizopus delemar (strain RA 99-880 / ATCC MYA-4621 / FGSC 9543 / NRRL 43880) (Mucormycosis agent).